A 356-amino-acid polypeptide reads, in one-letter code: 3-isopropylmalate dehydrogenase (356 aa).

The substrate site is built by R90, R100, R128, and D222. Mg(2+)-binding residues include D222, D246, and D250. 280-292 (GSAPDIAGKGVAN) contributes to the NAD(+) binding site.

This sequence belongs to the isocitrate and isopropylmalate dehydrogenases family. LeuB type 1 subfamily. As to quaternary structure, homodimer. Mg(2+) serves as cofactor. Mn(2+) is required as a cofactor.

Its subcellular location is the cytoplasm. The catalysed reaction is (2R,3S)-3-isopropylmalate + NAD(+) = 4-methyl-2-oxopentanoate + CO2 + NADH. It functions in the pathway amino-acid biosynthesis; L-leucine biosynthesis; L-leucine from 3-methyl-2-oxobutanoate: step 3/4. Functionally, catalyzes the oxidation of 3-carboxy-2-hydroxy-4-methylpentanoate (3-isopropylmalate) to 3-carboxy-4-methyl-2-oxopentanoate. The product decarboxylates to 4-methyl-2 oxopentanoate. This Albidiferax ferrireducens (strain ATCC BAA-621 / DSM 15236 / T118) (Rhodoferax ferrireducens) protein is 3-isopropylmalate dehydrogenase.